Reading from the N-terminus, the 279-residue chain is Methyltransferase ausD (279 aa).

Residues 124 to 125 (DI) and 152 to 153 (DV) contribute to the S-adenosyl-L-methionine site.

It belongs to the class I-like SAM-binding methyltransferase superfamily. As to quaternary structure, homodimer.

It participates in secondary metabolite biosynthesis; terpenoid biosynthesis. In terms of biological role, methyltransferase; part of the gene cluster A that mediates the biosynthesis of the fungal meroterpenoid acetoxydehydroaustin. The first step of the pathway is the synthesis of 3,5-dimethylorsellinic acid by the polyketide synthase ausA. 3,5-dimethylorsellinic acid is then prenylated by the polyprenyl transferase ausN. Further epoxidation by the FAD-dependent monooxygenase ausM and cyclization by the probable terpene cyclase ausL lead to the formation of protoaustinoid A. Protoaustinoid A is then oxidized to spiro-lactone preaustinoid A3 by the combined action of the FAD-binding monooxygenases ausB and ausC, and the dioxygenase ausE. Acid-catalyzed keto-rearrangement and ring contraction of the tetraketide portion of preaustinoid A3 by ausJ lead to the formation of preaustinoid A4. The aldo-keto reductase ausK, with the help of ausH, is involved in the next step by transforming preaustinoid A4 into isoaustinone which is in turn hydroxylated by the P450 monooxygenase ausI to form austinolide. The cytochrome P450 monooxygenase ausG then modifies austinolide to austinol. Austinol is further acetylated to austin by the O-acetyltransferase ausP, which spontaneously changes to dehydroaustin. The cytochrome P450 monooxygenase then converts dehydroaustin is into 7-dehydrodehydroaustin. The hydroxylation catalyzed by ausR permits the second O-acetyltransferase ausQ to add an additional acetyl group to the molecule, leading to the formation of acetoxydehydroaustin. Due to genetic rearrangements of the clusters and the subsequent loss of some enzymes, the end product of the Penicillium brasilianum austinoid biosynthesis clusters is acetoxydehydroaustin. In Penicillium brasilianum, this protein is Methyltransferase ausD.